Here is a 659-residue protein sequence, read N- to C-terminus: MTVYLPDGKPLELPEGATAKDVARALGEGWERRAVGAIVDGELYDLLKPLPQGAKVRLLTEKDPEFQTLFRHTLAHVLAQAVKEFFREKGYDPESVRLGVGPVIEKGFYYDIEAPEPLSDEDLPAIEAKMREILKRDLPLRRFVLSREEALARYRGKDPYKTELILEIPEGEEISFYQQGDEAYGFTDLCRGPHVPSTGRIPPHFKLTHVAGAYWRGDENRPMLQRVYGVAFRTAEELKEYLWQLEEAKKRDHRRLGRELELFLIDPMVGKGLVLWLPKGNVVREELMAFMREEQVRRGYQLVTTPHIGSLELYKTSGHYPYYAESQFPPISFKERGEEEEYLLKPMNCPHHIRIYAYRKRSYRELPLRLAEFGTVYRYEKAGELLGLTRVRGFTQDDAHIFCTPEEVKGEFLGVLDLVLKVFATLGLKDYRARIGVRDPKSDKYVGDEAKWALAERQIEEAAAEAGLRYTVEEGDAAFYGPKLDFVVKDALGREWQLGTIQVDYNLPERFGLTYVGKDGEEHRPVMLHRAPFGSLERFIGILIEHFAGDFPLWLAPVQAVVVPVSEKQEGYAREVAGRLKEAGLRAEADTRPERMQARIRDAEVQKVPYVLVVGEREKAEGAVSVRRRKKGNLGTMPLAAFLEGALREYRERRLEPVF.

The TGS domain occupies 1 to 60; it reads MTVYLPDGKPLELPEGATAKDVARALGEGWERRAVGAIVDGELYDLLKPLPQGAKVRLLT. Positions 252-552 are catalytic; that stretch reads DHRRLGRELE…LIEHFAGDFP (301 aa). Zn(2+) contacts are provided by cysteine 349, histidine 400, and histidine 529.

Belongs to the class-II aminoacyl-tRNA synthetase family. As to quaternary structure, homodimer. Zn(2+) serves as cofactor.

It localises to the cytoplasm. It catalyses the reaction tRNA(Thr) + L-threonine + ATP = L-threonyl-tRNA(Thr) + AMP + diphosphate + H(+). Its function is as follows. Catalyzes the attachment of threonine to tRNA(Thr) in a two-step reaction: L-threonine is first activated by ATP to form Thr-AMP and then transferred to the acceptor end of tRNA(Thr). Also edits incorrectly charged L-seryl-tRNA(Thr). This is Threonine--tRNA ligase from Thermus thermophilus (strain ATCC BAA-163 / DSM 7039 / HB27).